We begin with the raw amino-acid sequence, 134 residues long: D-ribose pyranase (134 aa).

The active-site Proton donor is His-20. Residues Asp-28, His-101, and 123–125 each bind substrate; that span reads YCN.

Belongs to the RbsD / FucU family. RbsD subfamily. Homodecamer.

The protein localises to the cytoplasm. It carries out the reaction beta-D-ribopyranose = beta-D-ribofuranose. It functions in the pathway carbohydrate metabolism; D-ribose degradation; D-ribose 5-phosphate from beta-D-ribopyranose: step 1/2. Functionally, catalyzes the interconversion of beta-pyran and beta-furan forms of D-ribose. This chain is D-ribose pyranase, found in Pseudomonas fluorescens (strain Pf0-1).